The sequence spans 207 residues: Uracil phosphoribosyltransferase (207 aa).

5-phospho-alpha-D-ribose 1-diphosphate-binding positions include R77, R102, and 129–137 (DPMLATGGS). Residues I192 and 197-199 (GDA) contribute to the uracil site. Residue D198 coordinates 5-phospho-alpha-D-ribose 1-diphosphate.

This sequence belongs to the UPRTase family. The cofactor is Mg(2+).

The enzyme catalyses UMP + diphosphate = 5-phospho-alpha-D-ribose 1-diphosphate + uracil. Its pathway is pyrimidine metabolism; UMP biosynthesis via salvage pathway; UMP from uracil: step 1/1. With respect to regulation, allosterically activated by GTP. Its function is as follows. Catalyzes the conversion of uracil and 5-phospho-alpha-D-ribose 1-diphosphate (PRPP) to UMP and diphosphate. The sequence is that of Uracil phosphoribosyltransferase from Mesoplasma florum (strain ATCC 33453 / NBRC 100688 / NCTC 11704 / L1) (Acholeplasma florum).